Consider the following 1028-residue polypeptide: Pro-apoptotic serine protease nma111 (1028 aa).

The disordered stretch occupies residues 1-46 (MDLNGETSTKRKRSSVAAPAERPAKHLKPESSTLTPGDATPANGTV). Residues 82–266 (VVSIHFCQTC…AATDYFLPLD (185 aa)) are serine protease. Residues His-120, Asp-151, and Ser-233 each act as charge relay system in the active site. 2 consecutive PDZ domains span residues 305–377 (PEWE…QRGG) and 876–957 (VFCG…VTFD). Residues 989 to 1028 (TVSHDRDRHKDGITPDAANLNPDAMDEVYEEVSDVEPEVD) are disordered. The span at 990–1001 (VSHDRDRHKDGI) shows a compositional bias: basic and acidic residues. Positions 1012–1028 (AMDEVYEEVSDVEPEVD) are enriched in acidic residues.

The protein belongs to the peptidase S1C family.

It localises to the nucleus. Nuclear serine protease which mediates apoptosis. This is Pro-apoptotic serine protease nma111 (nma111) from Neosartorya fischeri (strain ATCC 1020 / DSM 3700 / CBS 544.65 / FGSC A1164 / JCM 1740 / NRRL 181 / WB 181) (Aspergillus fischerianus).